We begin with the raw amino-acid sequence, 358 residues long: Peptide chain release factor 1 (358 aa).

Gln-233 is subject to N5-methylglutamine.

Belongs to the prokaryotic/mitochondrial release factor family. Methylated by PrmC. Methylation increases the termination efficiency of RF1.

It is found in the cytoplasm. Functionally, peptide chain release factor 1 directs the termination of translation in response to the peptide chain termination codons UAG and UAA. The chain is Peptide chain release factor 1 from Beijerinckia indica subsp. indica (strain ATCC 9039 / DSM 1715 / NCIMB 8712).